A 141-amino-acid polypeptide reads, in one-letter code: Large ribosomal subunit protein uL11 (141 aa).

It belongs to the universal ribosomal protein uL11 family. As to quaternary structure, part of the ribosomal stalk of the 50S ribosomal subunit. Interacts with L10 and the large rRNA to form the base of the stalk. L10 forms an elongated spine to which L12 dimers bind in a sequential fashion forming a multimeric L10(L12)X complex. Post-translationally, one or more lysine residues are methylated.

Functionally, forms part of the ribosomal stalk which helps the ribosome interact with GTP-bound translation factors. The protein is Large ribosomal subunit protein uL11 of Thermotoga sp. (strain RQ2).